The primary structure comprises 273 residues: Vacuolar membrane protein YPL162C (273 aa).

At 1–13 (MYVSNGKDTCQLL) the chain is on the vacuolar side. A helical transmembrane segment spans residues 14 to 34 (GPVSLFVQTLMGMTAVIVLLV). Topologically, residues 35–51 (KRNYEHPRRKMIVWSYD) are cytoplasmic. The chain crosses the membrane as a helical span at residues 52–72 (IGKQIIGSLGIHFLNLGISIL). Topologically, residues 73-97 (KKRRRSLFAITAKGNDDEDQCDWYF) are vacuolar. Residues 98–118 (LNLLLDTTVGIPILWLCLYII) form a helical membrane-spanning segment. Residues 119–156 (EKVLKSLHFQNIESGNYFPSKTVGSHPRKPLFSAFVKQ) lie on the Cytoplasmic side of the membrane. The chain crosses the membrane as a helical span at residues 157–177 (LLIFIVGLGVMKFCVFLILNY). Topologically, residues 178-198 (LEDLAYWFADLILGWSDSWPN) are vacuolar. The helical transmembrane segment at 199-219 (FQVFLVMFVFPILLNCFQYFC) threads the bilayer. Over 220 to 273 (VDNVIRLHSESLTITNAENFETNTFLNDEIPDLSEVSNEVPNKDNNISSYGSII) the chain is Cytoplasmic.

The protein localises to the vacuole membrane. The protein is Vacuolar membrane protein YPL162C of Saccharomyces cerevisiae (strain ATCC 204508 / S288c) (Baker's yeast).